Consider the following 374-residue polypeptide: Translocating chain-associated membrane protein 1 (374 aa).

The Cytoplasmic segment spans residues 1-29 (MAIRKKSSKNPPVLSHEFVLQNHADIVSC). The chain crosses the membrane as a helical span at residues 30–50 (VAMVFLLGLMFEITAKVSIIF). The Lumenal segment spans residues 51-81 (VTLQYNVTLPATEEQATESAFLYYYGIKDLA). A glycan (N-linked (GlcNAc...) asparagine) is linked at Asn56. The chain crosses the membrane as a helical span at residues 82-102 (TVFFYMLVAIIIHAIIQEYVL). The Cytoplasmic portion of the chain corresponds to 103–121 (DKINRRMHFSKTKHSKFNE). One can recognise a TLC domain in the interval 117-326 (SKFNESGQLS…NFQLRRWREH (210 aa)). A helical transmembrane segment spans residues 122-142 (SGQLSAFYLFSCIWGTFILIS). Topologically, residues 143–159 (ENYISDPTILWRAYPHN) are lumenal. A helical transmembrane segment spans residues 160–180 (LMTFQMKFFYISQLAYWFHAF). The Cytoplasmic portion of the chain corresponds to 181-192 (PELYFQKTKKED). The helical transmembrane segment at 193–213 (IPRQLVYIGLYLFHIAGAYLL) threads the bilayer. A topological domain (lumenal) is located at residue Asn214. Residues 215–235 (LNHLGLVLLVLHYFVEFLFHI) form a helical membrane-spanning segment. Residues 236–251 (SRLFYFSDEKYQKGFS) lie on the Cytoplasmic side of the membrane. Residues 252–272 (LWAVLFVLGRLLTLILSVLTV) form a helical membrane-spanning segment. Residues 273 to 297 (GFGLARAENQKLDFSTGNFNVLAVR) are Lumenal-facing. A helical membrane pass occupies residues 298 to 318 (IAVLASICITQAFMMWKFINF). At 319–374 (QLRRWREHSAFQAPAVKKKPPVTKGRSSRKGTENGVNGTVTSNGADSPRNRKEKSS) the chain is on the cytoplasmic side. The segment at 331–374 (APAVKKKPPVTKGRSSRKGTENGVNGTVTSNGADSPRNRKEKSS) is disordered. Over residues 334–347 (VKKKPPVTKGRSSR) the composition is skewed to basic residues. The segment covering 352–363 (NGVNGTVTSNGA) has biased composition (polar residues). Phosphoserine is present on Ser365.

Belongs to the TRAM family. As to quaternary structure, interacts with SEC61B. May interact with Derlin-1/DERL1. In terms of processing, N-glycosylated.

It is found in the endoplasmic reticulum membrane. Functionally, involved in the translocation of nascent protein chains into or through the endoplasmic reticulum (ER) membrane by facilitating the proper chain positioning at the SEC61 channel. Regulates the exposure of nascent secretory protein chain to the cytosol during translocation into the ER. May affect the phospholipid bilayer in the vicinity of the lateral gate of the SEC61 channel, thereby facilitating ER protein transport. Intimately associates with transmembrane (TM) domain of nascent membrane proteins during the entire integration process into the ER membrane. Associates with the second TM domain of G-protein-coupled receptor opsin/OPSD nascent chain in the ER membrane, which may facilitate its integration into the membrane. Under conditions of ER stress, participates in the disposal of misfolded ER membrane proteins during the unfolded protein response (UPR), an integrated stress response (ISR) pathway, by selectively retrotranslocating misfolded ER-membrane proteins from the ER into the cytosol where they are ubiquitinated and degraded by the proteasome. This chain is Translocating chain-associated membrane protein 1 (TRAM1), found in Bos taurus (Bovine).